Reading from the N-terminus, the 360-residue chain is Peptide chain release factor 1 (360 aa).

Q235 bears the N5-methylglutamine mark. Residues 286 to 313 (RQQAEASTRRNLLGSGDRSDRNRTYNFP) form a disordered region.

Belongs to the prokaryotic/mitochondrial release factor family. Post-translationally, methylated by PrmC. Methylation increases the termination efficiency of RF1.

It is found in the cytoplasm. Its function is as follows. Peptide chain release factor 1 directs the termination of translation in response to the peptide chain termination codons UAG and UAA. The protein is Peptide chain release factor 1 of Cronobacter sakazakii (strain ATCC BAA-894) (Enterobacter sakazakii).